A 47-amino-acid polypeptide reads, in one-letter code: Bifunctional chitinase/lysozyme (47 aa).

Positions 1–47 (GGIAIYWGQNGNEGTLTQTCNTGKYSYVNIAFLNKFGNGQTPEINLA) constitute a GH18 domain.

Belongs to the glycosyl hydrolase 18 family. Chitinase class II subfamily.

It localises to the secreted. It is found in the extracellular space. It catalyses the reaction Random endo-hydrolysis of N-acetyl-beta-D-glucosaminide (1-&gt;4)-beta-linkages in chitin and chitodextrins.. It carries out the reaction Hydrolysis of (1-&gt;4)-beta-linkages between N-acetylmuramic acid and N-acetyl-D-glucosamine residues in a peptidoglycan and between N-acetyl-D-glucosamine residues in chitodextrins.. Its function is as follows. Bifunctional enzyme with lysozyme/chitinase activity. The protein is Bifunctional chitinase/lysozyme of Parthenocissus quinquefolia (Virginia creeper).